Consider the following 201-residue polypeptide: ATP-dependent Clp protease proteolytic subunit (201 aa).

The active-site Nucleophile is Ser101. His126 is an active-site residue.

This sequence belongs to the peptidase S14 family. As to quaternary structure, component of the chloroplastic Clp protease core complex.

The protein localises to the plastid. Its subcellular location is the chloroplast stroma. The enzyme catalyses Hydrolysis of proteins to small peptides in the presence of ATP and magnesium. alpha-casein is the usual test substrate. In the absence of ATP, only oligopeptides shorter than five residues are hydrolyzed (such as succinyl-Leu-Tyr-|-NHMec, and Leu-Tyr-Leu-|-Tyr-Trp, in which cleavage of the -Tyr-|-Leu- and -Tyr-|-Trp bonds also occurs).. Cleaves peptides in various proteins in a process that requires ATP hydrolysis. Has a chymotrypsin-like activity. Plays a major role in the degradation of misfolded proteins. This is ATP-dependent Clp protease proteolytic subunit from Staurastrum punctulatum (Green alga).